The chain runs to 398 residues: NADH dehydrogenase [ubiquinone] iron-sulfur protein 2 (398 aa).

3 residues coordinate [4Fe-4S] cluster: C261, C267, and C282.

Belongs to the complex I 49 kDa subunit family. Complex I is composed of about 45 different subunits. This is a component of the iron-sulfur (IP) fragment of the enzyme. [4Fe-4S] cluster is required as a cofactor.

The protein resides in the mitochondrion. The enzyme catalyses a ubiquinone + NADH + 5 H(+)(in) = a ubiquinol + NAD(+) + 4 H(+)(out). In terms of biological role, core subunit of the mitochondrial membrane respiratory chain NADH dehydrogenase (Complex I) that is believed to belong to the minimal assembly required for catalysis. Complex I functions in the transfer of electrons from NADH to the respiratory chain. The immediate electron acceptor for the enzyme is believed to be ubiquinone. Component of the iron-sulfur (IP) fragment of the enzyme. The chain is NADH dehydrogenase [ubiquinone] iron-sulfur protein 2 (NAD7) from Nephroselmis olivacea (Green alga).